The sequence spans 494 residues: Flavin-containing monooxygenase ustF2 (494 aa).

The signal sequence occupies residues 1 to 21 (MANPQTTRVAVVGAGISGVLA). 13–18 (GAGISG) contributes to the FAD binding site. Residues 73–93 (EPSYPAMKPSKADPPATNEQE) form a disordered region. 250–255 (GGGVSS) lines the NADP(+) pocket. Asn459 is a glycosylation site (N-linked (GlcNAc...) asparagine).

Belongs to the FMO family.

It functions in the pathway mycotoxin biosynthesis. Functionally, flavin-containing monooxygenase; part of the gene cluster that mediates the biosynthesis of the secondary metabolite ustiloxin B, an antimitotic tetrapeptide. First, ustA is processed by the subtilisin-like endoprotease Kex2 that is outside the ustiloxin B gene cluster, at the C-terminal side of Arg-Lys, after transfer to Golgi apparatus through the endoplasmic reticulum (ER). Cleavage by KEX2 generates 16 peptides YAIG-I to YAIG-XVI. To process the precursor peptide further, at least two peptidases are necessary to cleave the N-terminal and C-terminal sides of the Tyr-Ala-Ile-Gly core peptide which serves as backbone for the synthesis of ustiloxin B, through cyclization and modification of the tyrosine with a non-protein coding amino acid, norvaline. One of the two peptidases must be the serine peptidase ustP; and the other pepdidase is probably ustH. Macrocyclization of the core peptide derived from ustA requires the tyrosinase ustQ, as well as the homologous oxidases ustYa and ustYb, and leads to the production of the first cyclization product N-desmethylustiloxin F. For the formation of N-desmethylustiloxin F, three oxidation steps are required, hydroxylation at the benzylic position, hydroxylation at either the aromatic ring of Tyr or beta-position of Ile, and oxidative cyclization. UstQ may catalyze the oxidation of a phenol moiety, whereas the ustYa and ustYb are most likely responsible for the remaining two-step oxidations. N-desmethylustiloxin F is then methylated by ustM to yield ustiloxin F which in turn substrate of the cytochrome P450 monooxygenase ustC which catalyzes the formation of S-deoxyustiloxin H. The flavoprotein monooxygenases ustF1 and ustF2 then participate in the modification of the side chain of S-deoxyustiloxin H, leading to the synthesis of an oxime intermediate, via ustiloxin H. Finally, carboxylative dehydration performed by the cysteine desulfurase-like protein ustD yields ustiloxin B. This is Flavin-containing monooxygenase ustF2 from Aspergillus flavus (strain ATCC 200026 / FGSC A1120 / IAM 13836 / NRRL 3357 / JCM 12722 / SRRC 167).